Here is a 224-residue protein sequence, read N- to C-terminus: MEAYKKEFIEFMIECGVLTFGDFVTKSGRKTPFFVNTGNYKTGSQLKRLGEYYAEAIKANYKDDYNIVFGPAYKGIPLSVTVTMALSDKYGIDVSYCSNRKEVKDHGDTGILLGSKLNDGDKVLIVEDVTTSGKSIYETMPIIKEQGNVDVVGLVISVNRMEKGQGEKSALVELEEKYGFKSCAIVTMTEVVEYLYNKEVNGKVIINDEIKTRIDEYYKEYGAK.

5-phospho-alpha-D-ribose 1-diphosphate is bound by residues Lys-26, 73 to 74 (YK), Arg-100, Lys-101, Lys-104, His-106, and 127 to 135 (EDVTTSGKS). 2 residues coordinate orotate: Thr-131 and Arg-160.

The protein belongs to the purine/pyrimidine phosphoribosyltransferase family. PyrE subfamily. As to quaternary structure, homodimer. The cofactor is Mg(2+).

The catalysed reaction is orotidine 5'-phosphate + diphosphate = orotate + 5-phospho-alpha-D-ribose 1-diphosphate. The protein operates within pyrimidine metabolism; UMP biosynthesis via de novo pathway; UMP from orotate: step 1/2. Its function is as follows. Catalyzes the transfer of a ribosyl phosphate group from 5-phosphoribose 1-diphosphate to orotate, leading to the formation of orotidine monophosphate (OMP). The protein is Orotate phosphoribosyltransferase of Clostridium botulinum (strain Alaska E43 / Type E3).